Consider the following 466-residue polypeptide: Putative chitinase 2 (466 aa).

The signal sequence occupies residues 1–17 (MYLTIWLVPLLAVGTWG). One can recognise a GH18 domain in the interval 20–380 (FNRFCHYNSW…MAVIHGLNAY (361 aa)). Cysteines 24 and 49 form a disulfide. Glu141 (proton donor) is an active-site residue. A coiled-coil region spans residues 395-447 (YNKKILRARVSLRNYRRRNQQGKVAEMEQRIRNLEQELQQSMGNMAYERQQAQ).

The protein belongs to the glycosyl hydrolase 18 family. Prismatic layer of shell (at protein level). Expressed primarily in the mantle with highest level in the mantle edge and lower level in the mantle pallium.

The protein localises to the secreted. It catalyses the reaction Random endo-hydrolysis of N-acetyl-beta-D-glucosaminide (1-&gt;4)-beta-linkages in chitin and chitodextrins.. This chain is Putative chitinase 2, found in Margaritifera margaritifera (Freshwater pearl mussel).